Consider the following 83-residue polypeptide: Acyl carrier protein (83 aa).

In terms of domain architecture, Carrier spans 2 to 77 (NEILSKIKSI…DANQYIKKYL (76 aa)). S37 bears the O-(pantetheine 4'-phosphoryl)serine mark.

Belongs to the acyl carrier protein (ACP) family. 4'-phosphopantetheine is transferred from CoA to a specific serine of apo-ACP by AcpS. This modification is essential for activity because fatty acids are bound in thioester linkage to the sulfhydryl of the prosthetic group.

It localises to the cytoplasm. It participates in lipid metabolism; fatty acid biosynthesis. In terms of biological role, carrier of the growing fatty acid chain in fatty acid biosynthesis. In Karelsulcia muelleri (strain GWSS) (Sulcia muelleri), this protein is Acyl carrier protein.